A 235-amino-acid polypeptide reads, in one-letter code: Phosphoribosylaminoimidazole-succinocarboxamide synthase (235 aa).

Belongs to the SAICAR synthetase family.

The enzyme catalyses 5-amino-1-(5-phospho-D-ribosyl)imidazole-4-carboxylate + L-aspartate + ATP = (2S)-2-[5-amino-1-(5-phospho-beta-D-ribosyl)imidazole-4-carboxamido]succinate + ADP + phosphate + 2 H(+). The protein operates within purine metabolism; IMP biosynthesis via de novo pathway; 5-amino-1-(5-phospho-D-ribosyl)imidazole-4-carboxamide from 5-amino-1-(5-phospho-D-ribosyl)imidazole-4-carboxylate: step 1/2. This is Phosphoribosylaminoimidazole-succinocarboxamide synthase from Clostridium novyi (strain NT).